An 86-amino-acid chain; its full sequence is Actinorhodin polyketide synthase acyl carrier protein (86 aa).

A Carrier domain is found at 4-82 (LLTTDDLRRA…ELLDLINGAL (79 aa)). An O-(pantetheine 4'-phosphoryl)serine modification is found at Ser42.

Post-translationally, 4'-phosphopantetheine is transferred from CoA to a specific serine of the apo-ACP-like protein.

It participates in antibiotic biosynthesis; actinorhodin biosynthesis. Functionally, acyl carrier protein. The sequence is that of Actinorhodin polyketide synthase acyl carrier protein from Streptomyces coelicolor (strain ATCC BAA-471 / A3(2) / M145).